The chain runs to 145 residues: Basic phospholipase A2 BFPA (145 aa).

The N-terminal stretch at 1–27 is a signal peptide; sequence MNPAHLLVLLAVCVSLLGAANIPPQSL. 7 disulfide bridges follow: C38-C97, C52-C144, C54-C70, C69-C125, C76-C118, C86-C111, and C104-C116. Ca(2+) is bound by residues Y53, G55, and G57. The active site involves H73. Position 74 (D74) interacts with Ca(2+). Residue D119 is part of the active site.

This sequence belongs to the phospholipase A2 family. Group I subfamily. D49 sub-subfamily. In terms of assembly, homodimer; disulfide-linked. It depends on Ca(2+) as a cofactor. Expressed by the venom gland.

The protein resides in the secreted. It catalyses the reaction a 1,2-diacyl-sn-glycero-3-phosphocholine + H2O = a 1-acyl-sn-glycero-3-phosphocholine + a fatty acid + H(+). Snake venom phospholipase A2 (PLA2) that inhibits blood coagulation and shows bactericidal activities against both Gram-negative and -positive bacteria (E.coli, MIC=0.4 uM and S.aureus, MIC=0.1 uM). PLA2 catalyzes the calcium-dependent hydrolysis of the 2-acyl groups in 3-sn-phosphoglycerides. In Bungarus fasciatus (Banded krait), this protein is Basic phospholipase A2 BFPA.